The following is a 647-amino-acid chain: Chaperone protein DnaK (647 aa).

Phosphothreonine; by autocatalysis is present on Thr-198. The segment at 603–647 is disordered; the sequence is EQAQGAGGAQGFDPNAFQGGDAGQQQKADDGVVDAEFTEVKDDKK. A compositionally biased stretch (low complexity) spans 618–628; the sequence is AFQGGDAGQQQ.

It belongs to the heat shock protein 70 family.

Acts as a chaperone. In Acinetobacter baylyi (strain ATCC 33305 / BD413 / ADP1), this protein is Chaperone protein DnaK.